The sequence spans 265 residues: Seminal vesicle secretory protein 3A (265 aa).

Positions methionine 1 to glycine 20 are cleaved as a signal peptide. Repeat copies occupy residues glutamine 116–serine 119, glutamine 122–serine 125, glutamine 129–serine 132, glutamine 136–threonine 139, and glutamine 142–serine 145. The 5 X 4 AA tandem repeats of Q-X-K-[ST] stretch occupies residues glutamine 116–serine 145.

In terms of processing, glycosylated. Covalently cross-linked by transglutaminase, which is important for the formation of the gelatinous copulatory plug. Five repeats of Q-X-K-(S/T) in the central region of the protein serve as the transglutaminase substrate site(s). Highly expressed in the seminal vesicle where it is detected in luminal epithelium of the mucosa folds, and also in luminal fluid (at protein level). Not detected in other tissues tested.

It localises to the secreted. Functionally, component of the copulatory plug. This Mus musculus (Mouse) protein is Seminal vesicle secretory protein 3A.